Consider the following 191-residue polypeptide: Neuronal calcium sensor 1 (191 aa).

Residue G2 is the site of N-myristoyl glycine attachment. 4 EF-hand domains span residues 24 to 59, 60 to 95, 96 to 131, and 144 to 179; these read ESEI…FPFG, DPSK…TSRG, TVEE…IYRM, and TPEK…DPTI. D73, N75, D77, E84, D109, D111, D113, Y115, E120, D157, N159, D161, Q163, and E168 together coordinate Ca(2+).

The protein belongs to the recoverin family.

The protein localises to the perikaryon. It is found in the cell projection. It localises to the growth cone. Neuronal calcium sensor, regulator of G protein-coupled receptor phosphorylation in a calcium dependent manner. Regulates neurite extension and branching by activity-dependent Ca(2+) influx in growth cones. The sequence is that of Neuronal calcium sensor 1 from Lymnaea stagnalis (Great pond snail).